The following is a 183-amino-acid chain: Transposon gamma-delta resolvase (183 aa).

Positions 2 to 137 constitute a Resolvase/invertase-type recombinase catalytic domain; it reads RLFGYARVST…EGRQEAMAKG (136 aa). The active-site O-(5'-phospho-DNA)-serine intermediate is the S10. Positions 161 to 180 form a DNA-binding region, H-T-H motif; the sequence is ASHISKTMNIARSTVYKVIN.

This sequence belongs to the site-specific recombinase resolvase family.

Its function is as follows. This protein catalyzes the site-specific recombination of the transposon and also regulates its frequency of transposition. The chain is Transposon gamma-delta resolvase (tnpR) from Escherichia coli (strain K12).